The following is a 335-amino-acid chain: Acetyl-coenzyme A carboxylase carboxyl transferase subunit alpha (335 aa).

One can recognise a CoA carboxyltransferase C-terminal domain in the interval 48 to 308; the sequence is TLELKVDALR…KEILIEELKA (261 aa).

Belongs to the AccA family. As to quaternary structure, acetyl-CoA carboxylase is a heterohexamer composed of biotin carboxyl carrier protein (AccB), biotin carboxylase (AccC) and two subunits each of ACCase subunit alpha (AccA) and ACCase subunit beta (AccD).

Its subcellular location is the cytoplasm. The enzyme catalyses N(6)-carboxybiotinyl-L-lysyl-[protein] + acetyl-CoA = N(6)-biotinyl-L-lysyl-[protein] + malonyl-CoA. The protein operates within lipid metabolism; malonyl-CoA biosynthesis; malonyl-CoA from acetyl-CoA: step 1/1. Component of the acetyl coenzyme A carboxylase (ACC) complex. First, biotin carboxylase catalyzes the carboxylation of biotin on its carrier protein (BCCP) and then the CO(2) group is transferred by the carboxyltransferase to acetyl-CoA to form malonyl-CoA. In Pelodictyon phaeoclathratiforme (strain DSM 5477 / BU-1), this protein is Acetyl-coenzyme A carboxylase carboxyl transferase subunit alpha.